The following is a 127-amino-acid chain: Flagellar assembly factor FliW (127 aa).

It belongs to the FliW family. Interacts with translational regulator CsrA and flagellin(s).

The protein localises to the cytoplasm. In terms of biological role, acts as an anti-CsrA protein, binds CsrA and prevents it from repressing translation of its target genes, one of which is flagellin. Binds to flagellin and participates in the assembly of the flagellum. The polypeptide is Flagellar assembly factor FliW (Campylobacter concisus (strain 13826)).